Consider the following 321-residue polypeptide: L-carnitine dehydrogenase (321 aa).

14–19 serves as a coordination point for NAD(+); sequence GSGVIG.

Belongs to the 3-hydroxyacyl-CoA dehydrogenase family. L-carnitine dehydrogenase subfamily. Homodimer.

The protein resides in the cytoplasm. It carries out the reaction carnitine + NAD(+) = 3-dehydrocarnitine + NADH + H(+). Its pathway is amine and polyamine metabolism; carnitine metabolism. Catalyzes the NAD(+)-dependent oxidation of L-carnitine to 3-dehydrocarnitine. In Pseudomonas putida (strain ATCC 47054 / DSM 6125 / CFBP 8728 / NCIMB 11950 / KT2440), this protein is L-carnitine dehydrogenase.